Reading from the N-terminus, the 480-residue chain is uncharacterized protein (480 aa).

Positions 1-21 (MSRYFSFFFLALFLHYRIIVA) are cleaved as a signal peptide. Disordered stretches follow at residues 38–72 (SSHLLHHSLPPPLLTQSHSSLSDPDPEPEPSSAEC) and 116–147 (SPLITENGTHADPKTPDLKTSSEAQGDTNDQT). Residues 51-60 (LTQSHSSLSD) show a composition bias toward low complexity. The span at 133–144 (LKTSSEAQGDTN) shows a compositional bias: polar residues. The helical transmembrane segment at 153–173 (YAVEIACVCFLIALAINYFVG) threads the bilayer. The disordered stretch occupies residues 404–480 (QARNKTESGR…VPKMKMSRSH (77 aa)). Residues 407-465 (NKTESGRQKAAEEAYKELHNARQEALQKKKAEKKKMMEEAEAKMSAEVIRKKEAKERAR) show a composition bias toward basic and acidic residues. Residues 411 to 467 (SGRQKAAEEAYKELHNARQEALQKKKAEKKKMMEEAEAKMSAEVIRKKEAKERARQV) adopt a coiled-coil conformation. Positions 466–480 (QVKKAVPKMKMSRSH) are enriched in basic residues.

It is found in the membrane. This is an uncharacterized protein from Arabidopsis thaliana (Mouse-ear cress).